Reading from the N-terminus, the 47-residue chain is Fasciclin-like arabinogalactan protein (47 aa).

Residues 1–47 (APTPATLNGLTIFAPNDEAFKATGVPDLSKLSNAPMVSLLQYHAAAR) enclose the FAS1 domain.

It belongs to the fasciclin-like AGP family.

Functionally, may be a cell surface adhesion protein. The chain is Fasciclin-like arabinogalactan protein from Jatropha curcas (Barbados nut).